We begin with the raw amino-acid sequence, 117 residues long: Acylphosphatase (117 aa).

An Acylphosphatase-like domain is found at 21-107 (RWRFRIRGLV…TGADWFEIRP (87 aa)). Catalysis depends on residues arginine 36 and asparagine 54.

Belongs to the acylphosphatase family.

The catalysed reaction is an acyl phosphate + H2O = a carboxylate + phosphate + H(+). The sequence is that of Acylphosphatase (acyP) from Synechococcus sp. (strain RCC307).